Reading from the N-terminus, the 500-residue chain is Lysine--tRNA ligase (500 aa).

Mg(2+)-binding residues include E410 and E417.

The protein belongs to the class-II aminoacyl-tRNA synthetase family. As to quaternary structure, homodimer. Requires Mg(2+) as cofactor.

Its subcellular location is the cytoplasm. The catalysed reaction is tRNA(Lys) + L-lysine + ATP = L-lysyl-tRNA(Lys) + AMP + diphosphate. This chain is Lysine--tRNA ligase, found in Shewanella frigidimarina (strain NCIMB 400).